A 145-amino-acid polypeptide reads, in one-letter code: Hemoglobin subunit beta (145 aa).

The Globin domain occupies Met1–His145. Thr11 is subject to Phosphothreonine. N6-acetyllysine is present on Lys58. His62 provides a ligand contact to heme b. Lys81 is modified (N6-acetyllysine). A heme b-binding site is contributed by His91. The residue at position 92 (Cys92) is an S-nitrosocysteine.

Belongs to the globin family. As to quaternary structure, heterotetramer of two alpha chains and two beta chains. As to expression, red blood cells.

Functionally, involved in oxygen transport from the lung to the various peripheral tissues. This Rangifer tarandus (Reindeer) protein is Hemoglobin subunit beta (HBB).